A 327-amino-acid polypeptide reads, in one-letter code: Phenylalanine--tRNA ligase alpha subunit (327 aa).

Glu-252 serves as a coordination point for Mg(2+).

It belongs to the class-II aminoacyl-tRNA synthetase family. Phe-tRNA synthetase alpha subunit type 1 subfamily. As to quaternary structure, tetramer of two alpha and two beta subunits. Mg(2+) is required as a cofactor.

It localises to the cytoplasm. The enzyme catalyses tRNA(Phe) + L-phenylalanine + ATP = L-phenylalanyl-tRNA(Phe) + AMP + diphosphate + H(+). The protein is Phenylalanine--tRNA ligase alpha subunit of Edwardsiella ictaluri (strain 93-146).